A 274-amino-acid polypeptide reads, in one-letter code: NH(3)-dependent NAD(+) synthetase (274 aa).

46-53 (GISGGQDS) contributes to the ATP binding site. Asp-52 contacts Mg(2+). Arg-140 is a deamido-NAD(+) binding site. Residue Thr-160 coordinates ATP. Position 165 (Glu-165) interacts with Mg(2+). 2 residues coordinate deamido-NAD(+): Lys-173 and Asp-180. 2 residues coordinate ATP: Lys-189 and Thr-211. A deamido-NAD(+)-binding site is contributed by 260–261 (HK).

Belongs to the NAD synthetase family. In terms of assembly, homodimer.

It carries out the reaction deamido-NAD(+) + NH4(+) + ATP = AMP + diphosphate + NAD(+) + H(+). Its pathway is cofactor biosynthesis; NAD(+) biosynthesis; NAD(+) from deamido-NAD(+) (ammonia route): step 1/1. Functionally, catalyzes the ATP-dependent amidation of deamido-NAD to form NAD. Uses ammonia as a nitrogen source. This is NH(3)-dependent NAD(+) synthetase from Streptococcus pyogenes serotype M6 (strain ATCC BAA-946 / MGAS10394).